Consider the following 167-residue polypeptide: MRKIITLVSREQAVIGHRFRVVSIPDECKSCKLYAVCLGKLTPGRSYEVIEIRPSLGQRCKITGEEVVPVVAAELPIVGLVPLNKALEGAIVTFEGECKGCKDCPDNIVKPGEKIKIIRVLGRTRCKDRDFATVEFYILEAPLPSELGAVGTYQDHSRAPLLRRPLK.

It belongs to the UPF0179 family.

The sequence is that of UPF0179 protein Pisl_0688 from Pyrobaculum islandicum (strain DSM 4184 / JCM 9189 / GEO3).